The sequence spans 798 residues: Nuclear cap-binding protein subunit 1 (798 aa).

Residues 28–241 (EKKLQGVIGK…SLSAQIEALR (214 aa)) form the MIF4G domain. A disordered region spans residues 663–686 (NKIKEEDDEESDIKMDEDETKEEK). Positions 668 to 682 (EDDEESDIKMDEDET) are enriched in acidic residues.

Belongs to the NCBP1 family. In terms of assembly, component of the nuclear cap-binding complex (CBC), a heterodimer composed of ncbp-1 and ncbp-1 that interacts with m7GpppG-capped RNA.

The protein resides in the nucleus. Its function is as follows. Component of the cap-binding complex (CBC), which binds cotranscriptionally to the 5'-cap of pre-mRNAs and is involved in various processes such as pre-mRNA splicing and RNA-mediated gene silencing (RNAi). The CBC complex is involved in miRNA-mediated RNA interference and is required for primary microRNAs (miRNAs) processing. In the CBC complex, ncbp-1 does not bind directly capped RNAs (m7GpppG-capped RNA) but is required to stabilize the movement of the N-terminal loop of ncbp-2 and lock the CBC into a high affinity cap-binding state with the cap structure. This chain is Nuclear cap-binding protein subunit 1 (ncbp-1), found in Caenorhabditis elegans.